The primary structure comprises 250 residues: tRNA (guanine-N(7)-)-methyltransferase (250 aa).

S-adenosyl-L-methionine contacts are provided by Glu86, Glu111, Asp138, and Asp161. Asp161 is an active-site residue. Residues Lys165, Asp197, and 229–232 (TEFE) contribute to the substrate site.

It belongs to the class I-like SAM-binding methyltransferase superfamily. TrmB family.

It catalyses the reaction guanosine(46) in tRNA + S-adenosyl-L-methionine = N(7)-methylguanosine(46) in tRNA + S-adenosyl-L-homocysteine. It participates in tRNA modification; N(7)-methylguanine-tRNA biosynthesis. Its function is as follows. Catalyzes the formation of N(7)-methylguanine at position 46 (m7G46) in tRNA. The protein is tRNA (guanine-N(7)-)-methyltransferase of Treponema pallidum (strain Nichols).